The sequence spans 143 residues: HTH-type transcriptional regulator BudR (143 aa).

An HTH lysR-type domain is found at 1 to 58; sequence MELRYLRYFVAVARERHFTRAAKALGISQPPLSQQIKRLEEEVGTPLFRRLTRGVELT. The H-T-H motif DNA-binding region spans 18–37; the sequence is FTRAAKALGISQPPLSQQIK.

Belongs to the LysR transcriptional regulatory family.

Functionally, regulator of the budABC operon for 2,3-butanediol synthesis. The chain is HTH-type transcriptional regulator BudR (budR) from Klebsiella aerogenes (Enterobacter aerogenes).